A 389-amino-acid chain; its full sequence is COP9 signalosome complex subunit 11 (389 aa).

The region spanning 143 to 312 is the PCI domain; that stretch reads QLIIDIPNLV…ILYQKFDPQM (170 aa).

Component of a COP9 signalosome-like (CSN) complex.

The protein resides in the cytoplasm. Its subcellular location is the nucleus. Functionally, component of the COP9 signalosome (CSN) complex that acts as an regulator of the ubiquitin (Ubl) conjugation pathway by mediating the deneddylation of the cullin subunit of SCF-type E3 ubiquitin-protein ligase complexes The CSN complex is involved in the regulation of the mating pheromone response. PCI8 may also be involved in transcriptional and translational control. The polypeptide is COP9 signalosome complex subunit 11 (PCI8) (Kluyveromyces lactis (strain ATCC 8585 / CBS 2359 / DSM 70799 / NBRC 1267 / NRRL Y-1140 / WM37) (Yeast)).